Consider the following 1412-residue polypeptide: Protein MODIFIER OF SNC1 1 (1412 aa).

Disordered stretches follow at residues 1-276 (MTSS…QSYP), 384-437 (GYGS…TQRP), 472-798 (QQMQ…KQKQ), 827-888 (NEGV…DESI), 909-1144 (DIKV…WNDG), and 1156-1412 (AEEM…GDRN). A compositionally biased stretch (polar residues) spans 56-103 (SWGSKSSLNAWGTSSLSPRTESGPGSPSHLSNRPSSGGSVTRPSTADS). The residue at position 72 (Ser72) is a Phosphoserine. Residues 109 to 119 (SSSSVAWDSNS) show a composition bias toward low complexity. Polar residues predominate over residues 120 to 135 (RPSSASGVFPSNQPSV). 2 stretches are compositionally biased toward basic and acidic residues: residues 197 to 207 (AEKDTSEKSTR) and 236 to 267 (ANDR…EGQL). Residues 478 to 488 (RNERREIRNDA) show a composition bias toward basic and acidic residues. Polar residues-rich tracts occupy residues 517–531 (KTRT…SSVV), 539–553 (QPRT…NKVS), 565–581 (SKNS…TNKN), and 610–639 (RIVN…TNTE). The span at 665–713 (DPKDNQRSTMRELARQRAQQRQKEEEERARDQRAKALAKLEELNRRSQI) shows a compositional bias: basic and acidic residues. The stretch at 667–717 (KDNQRSTMRELARQRAQQRQKEEEERARDQRAKALAKLEELNRRSQIYEEG) forms a coiled coil. Polar residues-rich tracts occupy residues 738–749 (GSHSSNATNSVE), 756–779 (KNTT…QQDN), and 829–847 (GVSS…SAES). Residues 850 to 862 (PKRKNNRNGKKKH) show a composition bias toward basic residues. Residues 877 to 888 (VGKETKSGDESI) are compositionally biased toward basic and acidic residues. Position 883 is a phosphoserine (Ser883). Composition is skewed to polar residues over residues 914-938 (GDSS…NWKS) and 983-1003 (QTTV…QTSS). Positions 1006 to 1023 (KRVEIERYVPKPIVKEMA) are enriched in basic and acidic residues. Residues 1056-1070 (LQPSGSTAGKSGSPS) are compositionally biased toward polar residues. Basic residues predominate over residues 1071-1084 (KSRHGNGRQGKHGR). The segment covering 1106–1137 (FVTSNQPIRGTVNYHSSKQTEQIAAKDQTTCN) has biased composition (polar residues). Basic and acidic residues-rich tracts occupy residues 1191-1202 (DPKKGNKRDFNK), 1222-1232 (KEGRVPGDHVW), and 1242-1251 (GGRESTRDKP). 2 stretches are compositionally biased toward polar residues: residues 1266–1286 (GFTT…QNRS) and 1293–1307 (VEQN…NTGQ). 2 stretches are compositionally biased toward basic and acidic residues: residues 1338-1351 (SNRD…HYEY) and 1359-1369 (YDGERSREQSK). The span at 1384–1397 (QGQQRQGGYQQQRG) shows a compositional bias: low complexity. Positions 1400-1412 (GRNGGHGFTGDRN) are enriched in gly residues.

Interacts with TCP14 and TCP15.

Involved in the regulation of the chromatin structure and DNA methylation at the SNC1 locus. Regulates the expression of SNC1 at chromatin level. This chain is Protein MODIFIER OF SNC1 1 (MOS1), found in Arabidopsis thaliana (Mouse-ear cress).